Reading from the N-terminus, the 105-residue chain is Protein RALF-like 21 (105 aa).

The signal sequence occupies residues 1–30 (MSNMKITNRFMLVATFIACVFISSMNMTVG). Disulfide bonds link Cys44–Cys53 and Cys67–Cys73.

This sequence belongs to the plant rapid alkalinization factor (RALF) family. As to expression, expressed in seeds and rosettes.

It localises to the secreted. Functionally, cell signaling peptide that may regulate plant stress, growth, and development. Mediates a rapid alkalinization of extracellular space by mediating a transient increase in the cytoplasmic Ca(2+) concentration leading to a calcium-dependent signaling events through a cell surface receptor and a concomitant activation of some intracellular mitogen-activated protein kinases. The polypeptide is Protein RALF-like 21 (RALFL21) (Arabidopsis thaliana (Mouse-ear cress)).